We begin with the raw amino-acid sequence, 217 residues long: 2-C-methyl-D-erythritol 4-phosphate cytidylyltransferase (217 aa).

This sequence belongs to the IspD/TarI cytidylyltransferase family. IspD subfamily.

It carries out the reaction 2-C-methyl-D-erythritol 4-phosphate + CTP + H(+) = 4-CDP-2-C-methyl-D-erythritol + diphosphate. It participates in isoprenoid biosynthesis; isopentenyl diphosphate biosynthesis via DXP pathway; isopentenyl diphosphate from 1-deoxy-D-xylulose 5-phosphate: step 2/6. In terms of biological role, catalyzes the formation of 4-diphosphocytidyl-2-C-methyl-D-erythritol from CTP and 2-C-methyl-D-erythritol 4-phosphate (MEP). The sequence is that of 2-C-methyl-D-erythritol 4-phosphate cytidylyltransferase from Chlamydia abortus (strain DSM 27085 / S26/3) (Chlamydophila abortus).